A 221-amino-acid chain; its full sequence is Iron-sulfur cluster repair protein YtfE (221 aa).

It belongs to the RIC family. YtfE subfamily. Homodimer.

It localises to the cytoplasm. Di-iron-containing protein involved in the repair of iron-sulfur clusters damaged by oxidative and nitrosative stress conditions. The sequence is that of Iron-sulfur cluster repair protein YtfE from Yersinia pseudotuberculosis serotype IB (strain PB1/+).